A 676-amino-acid polypeptide reads, in one-letter code: Pentatricopeptide repeat-containing protein ATP4 homolog, chloroplastic (676 aa).

Residues 1 to 73 (MASPSSLLSW…NSPRAAGLAR (73 aa)) constitute a chloroplast transit peptide. Positions 17 to 58 (LSFQPKNPSPSPATARVSVQDPPPPPSDANPSPGRSSNTSRY) are disordered. PPR repeat units follow at residues 148 to 182 (EVILYNVALKALRKRRRWSDAEALWEEMLREGVQP), 183 to 217 (DNATFSTVISCARACGMPGKAVEWFEKMPDFGCSP), 218 to 252 (DMLTYSAVIDAYGRAGDAETALRLYDRARAEKWQL), 253 to 287 (DPVICATVIRVHSSSGNFDGALNVFEEMKAAGVKP), 288 to 322 (NLVVYNTVLDAMGRAMRPWVVKTIHRELVSQEAVP), 323 to 353 (NKATYCCLLHAYTRARYGEDAMAVYRVMKDE), 358 to 388 (DVVLYNMLLSMCADIGYVEEAEEIFRDMKAS), 396 to 430 (DSWSYSSMVTLYSCTGNVAGAEGILNEMVEAGFKP), 431 to 465 (NIFILTSLIRCYGKAGRTDDVVRSFAMLEDLGITP), and 532 to 566 (RMPYCNCLMDLAVNLSQMEKACALLDVALRLGIYS). A Smr domain is found at 578-662 (LHLRGLSVGA…WFLTTSVAAR (85 aa)).

It belongs to the PPR family. P subfamily.

The protein localises to the plastid. It localises to the chloroplast. Involved in translation and accumulation of chloroplast ATP synthase subunits. The protein is Pentatricopeptide repeat-containing protein ATP4 homolog, chloroplastic of Oryza sativa subsp. japonica (Rice).